The primary structure comprises 1202 residues: DNA-directed RNA polymerase subunit beta (1202 aa).

Residues 1154 to 1202 form a disordered region; that stretch reads NMDEDDDEVVNVDALAKYAEEHKADDKKNEEENKSEATSTTTDDKTNQN. Over residues 1171–1188 the composition is skewed to basic and acidic residues; that stretch reads YAEEHKADDKKNEEENKS.

Belongs to the RNA polymerase beta chain family. In terms of assembly, the RNAP catalytic core consists of 2 alpha, 1 beta, 1 beta' and 1 omega subunit. When a sigma factor is associated with the core the holoenzyme is formed, which can initiate transcription.

It carries out the reaction RNA(n) + a ribonucleoside 5'-triphosphate = RNA(n+1) + diphosphate. In terms of biological role, DNA-dependent RNA polymerase catalyzes the transcription of DNA into RNA using the four ribonucleoside triphosphates as substrates. This is DNA-directed RNA polymerase subunit beta from Limosilactobacillus reuteri (strain DSM 20016) (Lactobacillus reuteri).